Consider the following 428-residue polypeptide: Probable pectin lyase F (428 aa).

The signal sequence occupies residues 1 to 20 (MVLLHPLLTAAALLGASARA). The cysteines at positions 83 and 107 are disulfide-linked. Residue Arg-257 is part of the active site. Asn-276 carries an N-linked (GlcNAc...) asparagine glycan. Cys-324 and Cys-332 are disulfide-bonded. 2 disordered regions span residues 337–367 (LTSS…MTTD) and 383–428 (GSGG…HHHY). A compositionally biased stretch (low complexity) spans 389-417 (AASSSASITPSPTSSAIPSSSATPSSSAY). Residues 418-428 (ARRHYARHHHY) show a composition bias toward basic residues.

The protein belongs to the polysaccharide lyase 1 family.

The protein localises to the secreted. The enzyme catalyses Eliminative cleavage of (1-&gt;4)-alpha-D-galacturonan methyl ester to give oligosaccharides with 4-deoxy-6-O-methyl-alpha-D-galact-4-enuronosyl groups at their non-reducing ends.. Functionally, pectinolytic enzymes consist of four classes of enzymes: pectin lyase, polygalacturonase, pectin methylesterase and rhamnogalacturonase. Among pectinolytic enzymes, pectin lyase is the most important in depolymerization of pectin, since it cleaves internal glycosidic bonds of highly methylated pectins. This chain is Probable pectin lyase F (pelF), found in Aspergillus flavus (strain ATCC 200026 / FGSC A1120 / IAM 13836 / NRRL 3357 / JCM 12722 / SRRC 167).